The chain runs to 339 residues: MAMAKALLFAILGCLCLCSAVLAARELSDDAAMAARHERWMAQYGRVYRDDAEKARRFEVFKANVAFIESFNAGNHNFWLGVNQFADLTNDEFRWMKTNKGFIPSTTRVPTGFRYENVNIDALPATVDWRTKGAVTPIKDQGQCGCCWAFSAVAAMEGIVKLSTGKLISLSEQELVDCDVHGEDQGCEGGLMDDAFKFIIKNGGLTTESNYPYAAADDKCKSVSNSVASIKGYEDVPANNEAALMKAVANQPVSVAVDGGDMTFQFYKGGVMTGSCGTDLDHGIVAIGYGKASDGTKYWLLKNSWGTTWGENGFLRMEKDISDKRGMCGLAMEPSYPTA.

Positions 1–23 are cleaved as a signal peptide; sequence MAMAKALLFAILGCLCLCSAVLA. Disulfide bonds link C144-C187, C178-C220, and C276-C328. C147 is a catalytic residue. Active-site residues include H282 and N303.

Belongs to the peptidase C1 family. In terms of tissue distribution, low expression in mature leaves.

The protein localises to the vacuole. Cysteine protease that may have a developmental senescence specific cell death function during apoptosis, heavy metal detoxification, and hypersensitive response. This is Senescence-specific cysteine protease SAG39 from Oryza sativa subsp. japonica (Rice).